The chain runs to 407 residues: MKKIALIIGSMIAGGIISAAGFTWVAKAEPPAEKTSTAERKILFWYDPMYPNTRFDKPGKSPFMDMDLVPKYADEESSASGVRIDPTQTQNLGVKTATVTRGPLTFAQSFPANVSYNEYQYAIVQARAAGFIDKVYPLTVGDKVQKGTPLLDLTIPDWVEAQSEYLLLRETGGTATQTEGILERLRLAGMPEADIRRLIATQKIQTRFTLKAPIDGVITAFDLRAGMNIAKDNVVAKIQGMDPVWVTAAIPESIAWLVKDASQFTLTVPARPDKTLTIRKWTLLPGVDAATRTLQLRLEVDNADEALKPGMNAWLQLNTASEPMLLIPSQALIDTGSEQRVITVDADGRFVPKRVAVFQASQGVTALRSGLAEGEKVVSSGLFLIDSEANISGALERMRSESATHAH.

The N-terminal stretch at 1-28 (MKKIALIIGSMIAGGIISAAGFTWVAKA) is a signal peptide.

This sequence belongs to the membrane fusion protein (MFP) (TC 8.A.1) family. In terms of assembly, the cus efflux system is composed of CusA, CusB, CusC and CusF.

Functionally, part of a cation efflux system that mediates resistance to copper and silver. This Escherichia coli (strain K12) protein is Cation efflux system protein CusB (cusB).